The sequence spans 263 residues: LOB domain-containing protein 41 (263 aa).

One can recognise an LOB domain in the interval Met-3–Val-109. The interval Thr-162 to Ser-204 is disordered. Composition is skewed to basic and acidic residues over residues Ser-169 to His-178 and Ala-190 to Glu-200.

The protein belongs to the LOB domain-containing protein family. Expressed in young shoots, roots, stems, leaves and flowers.

This is LOB domain-containing protein 41 (LBD41) from Arabidopsis thaliana (Mouse-ear cress).